The following is a 355-amino-acid chain: Gibberellin 3-beta-dioxygenase 4 (355 aa).

Residues 203 to 303 enclose the Fe2OG dioxygenase domain; it reads GRGAIRLNHY…RISIAYLWGG (101 aa). Fe cation contacts are provided by histidine 227, aspartate 229, and histidine 284. The active site involves arginine 294.

This sequence belongs to the iron/ascorbate-dependent oxidoreductase family. GA3OX subfamily. It depends on L-ascorbate as a cofactor. Fe cation serves as cofactor. As to expression, expressed in siliques and in seeds, specifically at the rim of the embryo and the outer integument. Also expressed in flowers. Not detected in roots, stems and leaves.

The catalysed reaction is gibberellin A20 + 2-oxoglutarate + O2 = gibberellin A1 + succinate + CO2. The protein operates within plant hormone biosynthesis; gibberellin biosynthesis. In terms of biological role, converts the inactive gibberellin (GA) precursors GA9 and GA20 in the bioactives gibberellins GA4 and GA1. Involved in the production of bioactive GA for reproductive development. The sequence is that of Gibberellin 3-beta-dioxygenase 4 from Arabidopsis thaliana (Mouse-ear cress).